Consider the following 446-residue polypeptide: Argininosuccinate synthase (446 aa).

Residues 17–25 and A43 contribute to the ATP site; that span reads AFSGGLDTS. Y99 serves as a coordination point for L-citrulline. ATP-binding residues include G129 and T131. 3 residues coordinate L-aspartate: T131, N135, and D136. L-citrulline is bound at residue N135. Position 136 (D136) interacts with ATP. The L-citrulline site is built by R139 and S192. Residue D194 participates in ATP binding. Positions 201, 203, and 280 each coordinate L-citrulline.

This sequence belongs to the argininosuccinate synthase family. Type 2 subfamily. Homotetramer.

It localises to the cytoplasm. The catalysed reaction is L-citrulline + L-aspartate + ATP = 2-(N(omega)-L-arginino)succinate + AMP + diphosphate + H(+). It participates in amino-acid biosynthesis; L-arginine biosynthesis; L-arginine from L-ornithine and carbamoyl phosphate: step 2/3. The chain is Argininosuccinate synthase from Burkholderia mallei (strain NCTC 10247).